The chain runs to 200 residues: GTP-binding protein rho2 (200 aa).

Residue 15-22 coordinates GTP; it reads GDGACGKT. The short motif at 37-45 is the Effector region element; that stretch reads YVPTVFENY. Residues 62-66 and 120-123 each bind GTP; these read DTAGQ and MKAD. Cysteine 197 carries the post-translational modification Cysteine methyl ester. Cysteine 197 is lipidated: S-geranylgeranyl cysteine. The propeptide at 198-200 is removed in mature form; sequence IIS.

The protein belongs to the small GTPase superfamily. Rho family. In terms of assembly, interacts with pck2.

Its subcellular location is the cell membrane. Involved in cell morphogenesis, the maintenance of growth direction, control of polarity and of cell wall integrity. Regulates the synthesis of alpha-D-glucan through activation of pck2. In Schizosaccharomyces pombe (strain 972 / ATCC 24843) (Fission yeast), this protein is GTP-binding protein rho2 (rho2).